A 600-amino-acid polypeptide reads, in one-letter code: Glutamine--fructose-6-phosphate aminotransferase [isomerizing] (600 aa).

Cys2 acts as the Nucleophile; for GATase activity in catalysis. The region spanning 2–217 is the Glutamine amidotransferase type-2 domain; it reads CGIVGYIGQL…DKEMVIVTDD (216 aa). 2 consecutive SIS domains span residues 283-422 and 452-590; these read IAAA…KNGI and IARE…VDKP. The active-site For Fru-6P isomerization activity is Lys595.

Homodimer.

The protein resides in the cytoplasm. The catalysed reaction is D-fructose 6-phosphate + L-glutamine = D-glucosamine 6-phosphate + L-glutamate. Catalyzes the first step in hexosamine metabolism, converting fructose-6P into glucosamine-6P using glutamine as a nitrogen source. The protein is Glutamine--fructose-6-phosphate aminotransferase [isomerizing] of Bacillus subtilis (strain 168).